A 152-amino-acid chain; its full sequence is SsrA-binding protein (152 aa).

This sequence belongs to the SmpB family.

It localises to the cytoplasm. Required for rescue of stalled ribosomes mediated by trans-translation. Binds to transfer-messenger RNA (tmRNA), required for stable association of tmRNA with ribosomes. tmRNA and SmpB together mimic tRNA shape, replacing the anticodon stem-loop with SmpB. tmRNA is encoded by the ssrA gene; the 2 termini fold to resemble tRNA(Ala) and it encodes a 'tag peptide', a short internal open reading frame. During trans-translation Ala-aminoacylated tmRNA acts like a tRNA, entering the A-site of stalled ribosomes, displacing the stalled mRNA. The ribosome then switches to translate the ORF on the tmRNA; the nascent peptide is terminated with the 'tag peptide' encoded by the tmRNA and targeted for degradation. The ribosome is freed to recommence translation, which seems to be the essential function of trans-translation. This is SsrA-binding protein from Rickettsia prowazekii (strain Madrid E).